We begin with the raw amino-acid sequence, 1058 residues long: Carbamoyl phosphate synthase large chain (1058 aa).

The tract at residues 1–401 (MPKRKDIQKI…SLLKACRSLE (401 aa)) is carboxyphosphate synthetic domain. ATP-binding residues include Arg129, Arg169, Gly175, Gly176, Arg208, Ile210, Glu215, Gly241, Ile242, His243, Gln284, and Glu298. Positions 133–327 (KQLMQELDQP…IAKLAAKIAV (195 aa)) constitute an ATP-grasp 1 domain. The Mg(2+) site is built by Gln284, Glu298, and Asn300. Positions 284, 298, and 300 each coordinate Mn(2+). The interval 402–546 (IGVCHNEMTS…YSTYELENES (145 aa)) is oligomerization domain. A carbamoyl phosphate synthetic domain region spans residues 547-929 (VQSNKESILV…ALYKAFEANN (383 aa)). An ATP-grasp 2 domain is found at 671-861 (EKALKELGIP…MAQIATKLIL (191 aa)). Residues Arg707, Ser746, Ile748, Glu752, Gly777, Val778, His779, Ser780, Gln820, and Glu832 each coordinate ATP. The Mg(2+) site is built by Gln820, Glu832, and Asn834. Mn(2+) is bound by residues Gln820, Glu832, and Asn834. Residues 930–1058 (SHLSEFGQIV…ESRCFNIEAI (129 aa)) enclose the MGS-like domain. An allosteric domain region spans residues 930–1058 (SHLSEFGQIV…ESRCFNIEAI (129 aa)).

The protein belongs to the CarB family. Composed of two chains; the small (or glutamine) chain promotes the hydrolysis of glutamine to ammonia, which is used by the large (or ammonia) chain to synthesize carbamoyl phosphate. Tetramer of heterodimers (alpha,beta)4. The cofactor is Mg(2+). Mn(2+) serves as cofactor.

The enzyme catalyses hydrogencarbonate + L-glutamine + 2 ATP + H2O = carbamoyl phosphate + L-glutamate + 2 ADP + phosphate + 2 H(+). The catalysed reaction is hydrogencarbonate + NH4(+) + 2 ATP = carbamoyl phosphate + 2 ADP + phosphate + 2 H(+). It functions in the pathway amino-acid biosynthesis; L-arginine biosynthesis; carbamoyl phosphate from bicarbonate: step 1/1. The protein operates within pyrimidine metabolism; UMP biosynthesis via de novo pathway; (S)-dihydroorotate from bicarbonate: step 1/3. Large subunit of the glutamine-dependent carbamoyl phosphate synthetase (CPSase). CPSase catalyzes the formation of carbamoyl phosphate from the ammonia moiety of glutamine, carbonate, and phosphate donated by ATP, constituting the first step of 2 biosynthetic pathways, one leading to arginine and/or urea and the other to pyrimidine nucleotides. The large subunit (synthetase) binds the substrates ammonia (free or transferred from glutamine from the small subunit), hydrogencarbonate and ATP and carries out an ATP-coupled ligase reaction, activating hydrogencarbonate by forming carboxy phosphate which reacts with ammonia to form carbamoyl phosphate. This Streptococcus pyogenes serotype M3 (strain SSI-1) protein is Carbamoyl phosphate synthase large chain.